The following is a 98-amino-acid chain: Large ribosomal subunit protein eL21 (98 aa).

A compositionally biased stretch (basic residues) spans 1-24 (MVKKAHSFRRKTRGKLSKHPRRRG). The disordered stretch occupies residues 1-27 (MVKKAHSFRRKTRGKLSKHPRRRGLPP).

Belongs to the eukaryotic ribosomal protein eL21 family.

The polypeptide is Large ribosomal subunit protein eL21 (Thermococcus gammatolerans (strain DSM 15229 / JCM 11827 / EJ3)).